A 349-amino-acid polypeptide reads, in one-letter code: Probable L-asparaginase periplasmic (349 aa).

The first 21 residues, 1 to 21 (MKLTKLALCTLFGLGVSIANA), serve as a signal peptide directing secretion. In terms of domain architecture, Asparaginase/glutaminase spans 25–349 (PNITILATGG…KVIQQYFEDF (325 aa)). The active-site O-isoaspartyl threonine intermediate is the Thr-35. Substrate contacts are provided by residues Ser-81 and 112–113 (TD). Cysteines 100 and 128 form a disulfide.

The protein belongs to the asparaginase 1 family.

Its subcellular location is the periplasm. It carries out the reaction L-asparagine + H2O = L-aspartate + NH4(+). The polypeptide is Probable L-asparaginase periplasmic (ansB) (Haemophilus influenzae (strain ATCC 51907 / DSM 11121 / KW20 / Rd)).